A 271-amino-acid chain; its full sequence is Formamidopyrimidine-DNA glycosylase (271 aa).

The Schiff-base intermediate with DNA role is filled by proline 2. The Proton donor role is filled by glutamate 3. Lysine 58 serves as the catalytic Proton donor; for beta-elimination activity. DNA-binding residues include histidine 91 and arginine 109. The segment at phenylalanine 236 to arginine 270 adopts an FPG-type zinc-finger fold. The active-site Proton donor; for delta-elimination activity is the arginine 260.

Belongs to the FPG family. As to quaternary structure, monomer. It depends on Zn(2+) as a cofactor.

It carries out the reaction Hydrolysis of DNA containing ring-opened 7-methylguanine residues, releasing 2,6-diamino-4-hydroxy-5-(N-methyl)formamidopyrimidine.. It catalyses the reaction 2'-deoxyribonucleotide-(2'-deoxyribose 5'-phosphate)-2'-deoxyribonucleotide-DNA = a 3'-end 2'-deoxyribonucleotide-(2,3-dehydro-2,3-deoxyribose 5'-phosphate)-DNA + a 5'-end 5'-phospho-2'-deoxyribonucleoside-DNA + H(+). Functionally, involved in base excision repair of DNA damaged by oxidation or by mutagenic agents. Acts as a DNA glycosylase that recognizes and removes damaged bases. Has a preference for oxidized purines, such as 7,8-dihydro-8-oxoguanine (8-oxoG). Has AP (apurinic/apyrimidinic) lyase activity and introduces nicks in the DNA strand. Cleaves the DNA backbone by beta-delta elimination to generate a single-strand break at the site of the removed base with both 3'- and 5'-phosphates. The sequence is that of Formamidopyrimidine-DNA glycosylase from Aromatoleum aromaticum (strain DSM 19018 / LMG 30748 / EbN1) (Azoarcus sp. (strain EbN1)).